The primary structure comprises 423 residues: ER-bound oxygenase mpaB' (423 aa).

At 1 to 22 the chain is on the lumenal side; that stretch reads MSLSLPPALSELARALPYSRTQ. Residues 23-41 traverse the membrane as a helical segment; that stretch reads WLPILVGFLIGYPLLIKAL. The Cytoplasmic portion of the chain corresponds to 42–423; sequence RYKRLGEMKK…ISRTGKCPFH (382 aa).

It belongs to the mpaB oxygenase family.

The protein resides in the endoplasmic reticulum membrane. It carries out the reaction 4-farnesyl-3,5-dihydroxy-6-methylphthalide + AH2 + 2 O2 = (4E,8E)-10-(4,6-dihydroxy-7-methyl-3-oxo-1,3-dihydro-2-benzofuran-5-yl)-4,8-dimethyldeca-4,8-dienoate + acetone + A + H2O + H(+). Its pathway is secondary metabolite biosynthesis; terpenoid biosynthesis. Functionally, ER-bound oxygenase; part of the gene cluster that mediates the biosynthesis of mycophenolic acid (MPA), the first isolated antibiotic natural product in the world obtained from a culture of Penicillium brevicompactum in 1893. MpaB' catalyzes the oxidative cleavage the C19-C20 double bond in farnesyl-DHMP (FDHMP) to yield FDHMP-3C via a mycophenolic aldehyde intermediate. The first step of the pathway is the synthesis of 5-methylorsellinic acid (5MOA) by the cytosolic polyketide synthase mpaC. 5MOA is then converted to the phthalide compound 5,7-dihydroxy-4,6-dimethylphthalide (DHMP) by the endoplasmic reticulum-bound cytochrome P450 monooxygenase mpaDE. MpaDE first catalyzes hydroxylation of 5-MOA to 4,6-dihydroxy-2-(hydroxymethyl)-3-methylbenzoic acid (DHMB). MpaDE then acts as a lactone synthase that catalyzes the ring closure to convert DHMB into DHMP. The next step is the prenylation of DHMP by the Golgi apparatus-associated prenyltransferase mpaA to yield farnesyl-DHMP (FDHMP). The ER-bound oxygenase mpaB then mediates the oxidative cleavage the C19-C20 double bond in FDHMP to yield FDHMP-3C via a mycophenolic aldehyde intermediate. The O-methyltransferase mpaG catalyzes the methylation of FDHMP-3C to yield MFDHMP-3C. After the cytosolic methylation of FDHMP-3C, MFDHMP-3C enters into peroxisomes probably via free diffusion due to its low molecular weight. Upon a peroxisomal CoA ligation reaction, catalyzed by a beta-oxidation component enzyme acyl-CoA ligase ACL891, MFDHMP-3C-CoA would then be restricted to peroxisomes for the following beta-oxidation pathway steps. The peroxisomal beta-oxidation machinery than converts MFDHMP-3C-CoA into MPA_CoA, via a beta-oxidation chain-shortening process. Finally mpaH acts as a peroxisomal acyl-CoA hydrolase with high substrate specificity toward MPA-CoA to release the final product MPA. In Penicillium brevicompactum, this protein is ER-bound oxygenase mpaB'.